The sequence spans 471 residues: MELNSSFWTLIKTKMKSRNDNNKLLDTWLDPIEYVSTTGSADRPRLVLGVPNALHQYFVIENLQDKIYTEISDTYGKPFEVEFSITGNKINSHIETSTTPDEVLSGSEILQAQLARAQNIQPTQPRSSSDTLNSELTFSTFVVGKNSEFAHAACYNVARNPGADDYNPLYIYGPVGMGKTHLLHAAGNHIREQYQHLRITYISAERFMNECISAIRRHEMDKFRQKYRENSDILLVDDVQFIARGEAVQEEFFHTVNSFIDSRKQVILASDRMPKDIHGLEDRSRTRLERGLIADITMPDLETRIAILRYKAEKYNVRLPEDVVNYIARISKRSIRELEGNLKKVKMFSELQGLPIDHELVKRILAHHETQSTISVEEIMKLVADHFKVRVLDLKSSTRAKPIVVPRQIAMYLIKKFLDKSLVDIGKSFGGKDHTTVMNALERVKNLQAADQDIAKDIEDLEQRIHNITRV.

Positions 1-77 are domain I, interacts with DnaA modulators; sequence MELNSSFWTL…YTEISDTYGK (77 aa). The tract at residues 77-130 is domain II; the sequence is KPFEVEFSITGNKINSHIETSTTPDEVLSGSEILQAQLARAQNIQPTQPRSSSD. The domain III, AAA+ region stretch occupies residues 131 to 349; the sequence is TLNSELTFST…GNLKKVKMFS (219 aa). 4 residues coordinate ATP: Gly176, Gly178, Lys179, and Thr180. The tract at residues 350–471 is domain IV, binds dsDNA; it reads ELQGLPIDHE…EQRIHNITRV (122 aa).

Belongs to the DnaA family. Oligomerizes as a right-handed, spiral filament on DNA at oriC.

It localises to the cytoplasm. Plays an essential role in the initiation and regulation of chromosomal replication. ATP-DnaA binds to the origin of replication (oriC) to initiate formation of the DNA replication initiation complex once per cell cycle. Binds the DnaA box (a 9 base pair repeat at the origin) and separates the double-stranded (ds)DNA. Forms a right-handed helical filament on oriC DNA; dsDNA binds to the exterior of the filament while single-stranded (ss)DNA is stabiized in the filament's interior. The ATP-DnaA-oriC complex binds and stabilizes one strand of the AT-rich DNA unwinding element (DUE), permitting loading of DNA polymerase. After initiation quickly degrades to an ADP-DnaA complex that is not apt for DNA replication. Binds acidic phospholipids. This is Chromosomal replication initiator protein DnaA from Bdellovibrio bacteriovorus (strain ATCC 15356 / DSM 50701 / NCIMB 9529 / HD100).